A 132-amino-acid chain; its full sequence is Small ribosomal subunit protein uS8 (132 aa).

Belongs to the universal ribosomal protein uS8 family. In terms of assembly, part of the 30S ribosomal subunit. Contacts proteins S5 and S12.

In terms of biological role, one of the primary rRNA binding proteins, it binds directly to 16S rRNA central domain where it helps coordinate assembly of the platform of the 30S subunit. The sequence is that of Small ribosomal subunit protein uS8 from Streptomyces griseus subsp. griseus (strain JCM 4626 / CBS 651.72 / NBRC 13350 / KCC S-0626 / ISP 5235).